Consider the following 406-residue polypeptide: RILP-like protein 1 (406 aa).

At S7 the chain carries Phosphoserine. Positions 10-97 (AALSALEKNV…RVERMDRIEK (88 aa)) constitute an RH1 domain. Residue C47 is modified to S-nitrosocysteine. A coiled-coil region spans residues 76–258 (ELDELRLELD…KLRERLQGEH (183 aa)). Disordered regions lie at residues 255–280 (QGEH…ESIS) and 330–354 (EIEE…QPES). Phosphoserine is present on S259. A compositionally biased stretch (acidic residues) spans 262 to 280 (GEEEEAEIPPQPDGEESIS). In terms of domain architecture, RH2 spans 294–359 (RPRFTLQELR…PQPESGIKRL (66 aa)).

It belongs to the RILPL family. In terms of assembly, interacts (when S-nitrosylated) with GAPDH. Interacts with RAB8A; interaction is dependent on the phosphorylation of 'Thr-72' of RAB8A. Interacts with RAB10 and RAB12; the interaction is dependent on the phosphorylation of 'Thr-73' of RAB10, and 'Ser-105' of RAB12. Post-translationally, S-nitrosylation is required for the interaction with GAPDH. In terms of tissue distribution, highly expressed in heart, skeletal muscle, brain and lung (at protein level).

The protein localises to the cytoplasm. It localises to the cytosol. Its subcellular location is the cytoskeleton. It is found in the microtubule organizing center. The protein resides in the centrosome. The protein localises to the centriole. It localises to the cilium basal body. In terms of biological role, plays a role in the regulation of cell shape and polarity. Plays a role in cellular protein transport, including protein transport away from primary cilia. Neuroprotective protein, which acts by sequestring GAPDH in the cytosol and prevent the apoptotic function of GAPDH in the nucleus. Competes with SIAH1 for binding GAPDH. Does not regulate lysosomal morphology and distribution. Binds to RAB10 following LRRK2-mediated RAB10 phosphorylation which leads to inhibition of ciliogenesis. The chain is RILP-like protein 1 (Rilpl1) from Rattus norvegicus (Rat).